Reading from the N-terminus, the 319-residue chain is Beta-xylosidase (319 aa).

Asp-14 serves as the catalytic Proton acceptor. The Proton donor role is filled by Glu-222.

This sequence belongs to the glycosyl hydrolase 43 family.

The enzyme catalyses Hydrolysis of (1-&gt;4)-beta-D-xylans, to remove successive D-xylose residues from the non-reducing termini.. In terms of biological role, exoxylanase capable of acting on certain xylans and xylooligosaccharides. This is Beta-xylosidase (xynB) from Xylanibacter ruminicola (Prevotella ruminicola).